A 353-amino-acid chain; its full sequence is UPF0283 membrane protein YcjF (353 aa).

The next 3 helical transmembrane spans lie at 70–90, 100–120, and 213–233; these read MVMG…IQWT, VALG…GSVV, and ESTL…FIAW.

It belongs to the UPF0283 family.

The protein resides in the cell inner membrane. This Shigella flexneri serotype 5b (strain 8401) protein is UPF0283 membrane protein YcjF.